The following is a 111-amino-acid chain: Iron-sulfur cluster assembly protein CyaY (111 aa).

This sequence belongs to the frataxin family.

Its function is as follows. Involved in iron-sulfur (Fe-S) cluster assembly. May act as a regulator of Fe-S biogenesis. The protein is Iron-sulfur cluster assembly protein CyaY of Cupriavidus metallidurans (strain ATCC 43123 / DSM 2839 / NBRC 102507 / CH34) (Ralstonia metallidurans).